Here is a 550-residue protein sequence, read N- to C-terminus: Chaperonin GroEL (550 aa).

ATP contacts are provided by residues 29 to 32 (TAGP), K50, 86 to 90 (DGTTT), G416, and D498.

Belongs to the chaperonin (HSP60) family. Forms a cylinder of 14 subunits composed of two heptameric rings stacked back-to-back. Interacts with the co-chaperonin GroES.

Its subcellular location is the cytoplasm. The enzyme catalyses ATP + H2O + a folded polypeptide = ADP + phosphate + an unfolded polypeptide.. Its function is as follows. Together with its co-chaperonin GroES, plays an essential role in assisting protein folding. The GroEL-GroES system forms a nano-cage that allows encapsulation of the non-native substrate proteins and provides a physical environment optimized to promote and accelerate protein folding. The sequence is that of Chaperonin GroEL from Anaplasma phagocytophilum (strain HZ).